The chain runs to 867 residues: MTSAELRARFLKFFADRGHTVVASSSLVPVNDPTLLFTNAGMVQFKDVFLGREHRPYVRAASAQRCVRAGGKHNDLENVGYTARHHTFFEMLGNFSFGDYFKREAIVYAWEFLTEVLMLPPERLWITVYAEDKEAERIWLEEVGVDPGRFTRIATSDNFWSMGDTGPCGPCSEIFYDHGPSVAGGPPGTPEEDGDRYVEIWNLVFMQYERAGDGTLTPLPKPSVDTGMGLERLAAVMQRVRNNYDIDLFRNLVKAAAELAGTTDLAQSSLRVIADHIRSCAFLVTDGVLPSNEGRGYVLRRIIRRAIRHGYKLGIREPFFYKLVGPLCAEMGQAYPELVEARPRVEQVLDKEEERFAETLEQGMKILDVAIRDLGSPVISGDTAFQLYDTYGFPVDLTADVAREHGLQVDMAGFERAMEAQRERARAASHFSVDYSQEIHLDVACEFTGYRNAVEDTRIVALLRDGQAVDRLEAGEDGVVVLEKTPFYAESGGQVGDRGVIRSDSAVFEVADTRKQGSDLILHRGKLREGALLRGAVCRAEVEQSLRLATALNHSATHLLHAALRRVLGEHVTQKGSLVDPERLRFDFSHFEPVSPEQLDEIERLVNREIRRNAEVTAEVMAKDAAMRLGAMALFGEKYGDDVRVLRIGDFSTELCGGIHARRAGDIGLFKIVSESGVAAGVRRIEAVTGAAAVEAVEATERLLRRLAERMKAGRDTLEERLDQMFEKNRALERELERLKAKTAGAAGADLASRAVDIAGVKVLAARVDEADARMLRELVDQLKDRLGSAAIVLAAVEGGKVSLVAGVTRDQTGHIRAGDLVNSVATRIGGKGGGRPDLAQAGGNRPEELQGALDGVPEWVRRMLNA.

Zn(2+) is bound by residues His554, His558, Cys656, and His660.

This sequence belongs to the class-II aminoacyl-tRNA synthetase family. Zn(2+) is required as a cofactor.

The protein localises to the cytoplasm. The enzyme catalyses tRNA(Ala) + L-alanine + ATP = L-alanyl-tRNA(Ala) + AMP + diphosphate. In terms of biological role, catalyzes the attachment of alanine to tRNA(Ala) in a two-step reaction: alanine is first activated by ATP to form Ala-AMP and then transferred to the acceptor end of tRNA(Ala). Also edits incorrectly charged Ser-tRNA(Ala) and Gly-tRNA(Ala) via its editing domain. The protein is Alanine--tRNA ligase of Methylococcus capsulatus (strain ATCC 33009 / NCIMB 11132 / Bath).